We begin with the raw amino-acid sequence, 339 residues long: F-box protein At3g22700 (339 aa).

The F-box domain occupies M1–A49.

The chain is F-box protein At3g22700 from Arabidopsis thaliana (Mouse-ear cress).